The chain runs to 119 residues: UPF0102 protein PM0647 (119 aa).

It belongs to the UPF0102 family.

This chain is UPF0102 protein PM0647, found in Pasteurella multocida (strain Pm70).